Reading from the N-terminus, the 336-residue chain is Torsin-1B (336 aa).

Residues 1–24 form the signal peptide; it reads MRRIGAFGGSTALWALLAAHVAGA. N-linked (GlcNAc...) asparagine glycosylation occurs at Asn-64. 109–116 lines the ATP pocket; it reads GWAGTGKN. An N-linked (GlcNAc...) asparagine glycan is attached at Asn-165.

It belongs to the ClpA/ClpB family. Torsin subfamily. Homohexamer. Interacts with TOR1A; the interaction may be specific of neural tissues. Interacts with TOR1AIP1; TOR1AIP1 is required for TOR1B location on the nuclear membrane. Interacts (ATP-bound) with TOR1AIP2; important for endoplasmic reticulum integrity. N-glycosylated. In terms of tissue distribution, highly expressed in liver and muscle; lower expression levels are observed in brain (at protein level).

It localises to the endoplasmic reticulum lumen. Its subcellular location is the nucleus membrane. The catalysed reaction is ATP + H2O = ADP + phosphate + H(+). May serve as a molecular chaperone assisting in the proper folding of secreted and/or membrane proteins. Plays a role in non-neural cells nuclear envelope and endoplasmic reticulum integrity. May have a redundant function with TOR1A in non-neural tissues. The sequence is that of Torsin-1B (Tor1b) from Mus musculus (Mouse).